The chain runs to 272 residues: Golgi to ER traffic protein 5 (272 aa).

Disordered stretches follow at residues 1–35 and 85–105; these read MSTVDQSTVTTALSSSSSNRHQGNDTYSIPKHSGT and LHAPHPEMPKKTKQPLAPGSS. The Ubiquitin-like domain maps to 108-198; the sequence is ITVHLKSARN…VEFGVMIIGG (91 aa). Positions 212-231 are disordered; sequence SAEQKESYEPPKPAVGPSGE.

This sequence belongs to the GET5 family. Forms homodimers via its C-terminal domain. Component of the get4/get5/sgt2 sorting complex. Binds directly sgt12 homodimers.

It is found in the cytoplasm. Functionally, component of the get4/get5/sgt2 sorting complex involved in the GET (guided entry of TA proteins) pathway that leads to the insertion of tail-anchored (TA) proteins into the endoplasmic reticulum. Get4 and get5 form an obligate complex that catalyzes the transfer of tail-anchored proteins destined to the endoplasmic reticulum from sgt2 to the cytosolic targeting factor which then targets the TA protein to the ER membrane via get1/get2. The protein is Golgi to ER traffic protein 5 of Aspergillus fumigatus (strain ATCC MYA-4609 / CBS 101355 / FGSC A1100 / Af293) (Neosartorya fumigata).